Consider the following 2222-residue polypeptide: Protein SWEETIE (2222 aa).

HEAT repeat units follow at residues 37–75 (LLCF…LVTL), 228–265 (SEFD…LGMH), 331–368 (SELQ…GVID), 510–540 (PARL…SEKE), 541–578 (AGWL…GNPE), 611–648 (CNDG…LVDI), 768–807 (QGML…GLKA), 898–936 (MALS…TIEA), 968–1008 (QGIG…WQEI), and 1029–1066 (VSVH…KDPV). Residues 1133 to 1165 (IAENDPAYTRENLGDDDEDMVSSSSGKSIRANP) form a disordered region. HEAT repeat units lie at residues 1238-1269 (MRPI…LLEQ), 1270-1306 (YQAQ…TSGI), 1312-1354 (VAVK…AHAS), 1372-1410 (VEFE…NLKK), 1434-1474 (EAWP…LEAE), 1550-1586 (DLCQ…NCPK), 1783-1820 (VMLK…RYNN), 1836-1874 (GDIV…HSIT), 1880-1917 (GFMS…LVSH), and 1966-2006 (AMDI…QVST). The interval 1992–2203 (EALSTMPTSF…DESSKEHVGA (212 aa)) is disordered. Over residues 1996–2009 (TMPTSFNQVSTVES) the composition is skewed to polar residues. Positions 2010 to 2027 (GTDEEEEEEEDDDDDDWD) are enriched in acidic residues. Over residues 2028-2040 (TFQSFPASTNLEG) the composition is skewed to polar residues. Acidic residues predominate over residues 2062-2072 (QDDESNAEETD). 2 stretches are compositionally biased toward basic and acidic residues: residues 2073-2096 (DQHL…SKEV) and 2108-2124 (TRED…EETV). Polar residues predominate over residues 2150–2164 (NEQSVESKNLESENI). Positions 2191–2202 (SPEDESSKEHVG) are enriched in basic and acidic residues.

This sequence belongs to the HEATR5 family.

May regulate multiple metabolic, hormonal and stress-related pathways. Required for carbohydrate metabolism and homoeostasis. May also monitor ethylene biosynthesis and senescence. In Arabidopsis thaliana (Mouse-ear cress), this protein is Protein SWEETIE.